The following is a 417-amino-acid chain: Tyrosine--tRNA ligase (417 aa).

Tyr-39 lines the L-tyrosine pocket. A 'HIGH' region motif is present at residues 44–53 (CTAPSLHVGH). The L-tyrosine site is built by Tyr-176 and Gln-180. The 'KMSKS' region signature appears at 236–240 (KMGKT). Position 239 (Lys-239) interacts with ATP. The S4 RNA-binding domain maps to 350 to 417 (AGVLALFVKA…KKRHVLLRPA (68 aa)).

It belongs to the class-I aminoacyl-tRNA synthetase family. TyrS type 1 subfamily. As to quaternary structure, homodimer.

It localises to the cytoplasm. The enzyme catalyses tRNA(Tyr) + L-tyrosine + ATP = L-tyrosyl-tRNA(Tyr) + AMP + diphosphate + H(+). Its function is as follows. Catalyzes the attachment of tyrosine to tRNA(Tyr) in a two-step reaction: tyrosine is first activated by ATP to form Tyr-AMP and then transferred to the acceptor end of tRNA(Tyr). The sequence is that of Tyrosine--tRNA ligase from Nitrobacter winogradskyi (strain ATCC 25391 / DSM 10237 / CIP 104748 / NCIMB 11846 / Nb-255).